The sequence spans 76 residues: ATP synthase subunit 9, mitochondrial (76 aa).

2 consecutive transmembrane segments (helical) span residues 10–30 and 52–72; these read IGAGISTIGLLGAGIGIAIVF and ILGFALSEATGLFCLMISFLL.

This sequence belongs to the ATPase C chain family. F-type ATPases have 2 components, CF(1) - the catalytic core - and CF(0) - the membrane proton channel. CF(1) has five subunits: alpha(3), beta(3), gamma(1), delta(1), epsilon(1). CF(0) has three main subunits: a, b and c.

The protein resides in the mitochondrion membrane. In terms of biological role, mitochondrial membrane ATP synthase (F(1)F(0) ATP synthase or Complex V) produces ATP from ADP in the presence of a proton gradient across the membrane which is generated by electron transport complexes of the respiratory chain. F-type ATPases consist of two structural domains, F(1) - containing the extramembraneous catalytic core and F(0) - containing the membrane proton channel, linked together by a central stalk and a peripheral stalk. During catalysis, ATP synthesis in the catalytic domain of F(1) is coupled via a rotary mechanism of the central stalk subunits to proton translocation. Part of the complex F(0) domain. A homomeric c-ring of probably 10 subunits is part of the complex rotary element. This Kluyveromyces lactis (strain ATCC 8585 / CBS 2359 / DSM 70799 / NBRC 1267 / NRRL Y-1140 / WM37) (Yeast) protein is ATP synthase subunit 9, mitochondrial (ATP9).